We begin with the raw amino-acid sequence, 705 residues long: Dolichyl-diphosphooligosaccharide--protein glycosyltransferase subunit STT3A (705 aa).

Over 1-17 (MTKLGFLRLSYEKQDTL) the chain is Cytoplasmic. The helical transmembrane segment at 18 to 38 (LKLLILSMAAVLSFSTRLFAV) threads the bilayer. At 39-119 (LRFESVIHEF…IDIRNVCVFL (81 aa)) the chain is on the lumenal side. The DXD motif 1 motif lies at 47–49 (EFD). Asp-49 contributes to the Mn(2+) binding site. The chain crosses the membrane as a helical span at residues 120–138 (APLFSSFTTIVTYHLTKEL). Residues 139–140 (KD) lie on the Cytoplasmic side of the membrane. Residues 141–158 (AGAGLLAAAMIAVVPGYI) traverse the membrane as a helical segment. The Lumenal segment spans residues 159–169 (SRSVAGSYDNE). Mn(2+) contacts are provided by Asp-167 and Glu-169. Residues 167–169 (DNE) carry the DXD motif 2 motif. Residues 170-189 (GIAIFCMLLTYYMWIKAVKT) form a helical membrane-spanning segment. At 190–191 (GS) the chain is on the cytoplasmic side. A helical transmembrane segment spans residues 192–206 (IYWAAKCALAYFYMV). Topologically, residues 207-211 (SSWGG) are lumenal. Residues 212–228 (YVFLINLIPLHVLVLML) form a helical membrane-spanning segment. The Cytoplasmic portion of the chain corresponds to 229 to 233 (TGRFS). A helical transmembrane segment spans residues 234–259 (HRIYVAYCTVYCLGTILSMQISFVGF). Residues 260-267 (QPVLSSEH) are Lumenal-facing. The chain crosses the membrane as a helical span at residues 268-287 (MAAFGVFGLCQIHAFVDYLR). The Cytoplasmic segment spans residues 288–300 (SKLNPQQFEVLFR). A helical transmembrane segment spans residues 301–321 (SVISLVGFVLLTVGALLMLTG). At 322 to 356 (KISPWTGRFYSLLDPSYAKNNIPIIASVSEHQPTT) the chain is on the lumenal side. The SVSE motif signature appears at 348 to 351 (SVSE). Residues 357 to 379 (WSSYYFDLQLLVFMFPVGLYYCF) form a helical membrane-spanning segment. The Cytoplasmic portion of the chain corresponds to 380-385 (SNLSDA). A helical membrane pass occupies residues 386-402 (RIFIIMYGVTSMYFSAV). The Lumenal portion of the chain corresponds to 403-406 (MVRL). Arg-405 is a binding site for dolichyl diphosphooligosaccharide. The helical transmembrane segment at 407–428 (MLVLAPVMCILSGIGVSQVLST) threads the bilayer. Residues 429-453 (YMKNLDISRPDKKSKKQQDSTYPIK) lie on the Cytoplasmic side of the membrane. The chain crosses the membrane as a helical span at residues 454–473 (NEVASGMILVMAFFLITYTF). Over 474–705 (HSTWVTSEAY…DLDNRGLSRT (232 aa)) the chain is Lumenal. Residues 525–527 (WWD) form an interacts with target acceptor peptide in protein substrate region. Residues 525–529 (WWDYG) carry the WWDYG motif motif. Tyr-530 is a dolichyl diphosphooligosaccharide binding site. Asn-537 and Asn-544 each carry an N-linked (GlcNAc...) asparagine glycan. Asn-548 carries an N-linked (GlcNAc...) (high mannose) asparagine glycan. Positions 592–599 (DINKFLWM) match the DK motif motif.

This sequence belongs to the STT3 family. In terms of assembly, component of the oligosaccharyltransferase (OST) complex. There are 2 OST complexes, OST-A and OST-B, which contain STT3A or STT3B as catalytic subunit, respectively. OST-A and OST-B contain common core subunits RPN1, RPN2, OST48, OST4, DAD1 and TMEM258, and OST-A contains DC2/OSTC and KRTCAP2/KCP2 specific accessory subunits. OST-A complex assembly occurs through the formation of 3 subcomplexes. Subcomplex 1 contains RPN1 and TMEM258, subcomplex 2 contains the OST-A-specific subunits STT3A, DC2/OSTC, and KCP2 as well as the core subunit OST4, and subcomplex 3 contains RPN2, DAD1, and OST48. The OST-A complex can form stable complexes with the Sec61 complex or with both the Sec61 and TRAP complexes. Requires Mg(2+) as cofactor. It depends on Mn(2+) as a cofactor.

It localises to the endoplasmic reticulum. The protein resides in the endoplasmic reticulum membrane. It catalyses the reaction a di-trans,poly-cis-dolichyl diphosphooligosaccharide + L-asparaginyl-[protein] = N(4)-(oligosaccharide-(1-&gt;4)-N-acetyl-beta-D-glucosaminyl-(1-&gt;4)-N-acetyl-beta-D-glucosaminyl)-L-asparaginyl-[protein] + a di-trans,poly-cis-dolichyl diphosphate + H(+). The protein operates within protein modification; protein glycosylation. In terms of biological role, catalytic subunit of the oligosaccharyl transferase (OST) complex that catalyzes the initial transfer of a defined glycan (Glc(3)Man(9)GlcNAc(2) in eukaryotes) from the lipid carrier dolichol-pyrophosphate to an asparagine residue within an Asn-X-Ser/Thr consensus motif in nascent polypeptide chains, the first step in protein N-glycosylation. N-glycosylation occurs cotranslationally and the complex associates with the Sec61 complex at the channel-forming translocon complex that mediates protein translocation across the endoplasmic reticulum (ER). All subunits are required for a maximal enzyme activity. This subunit contains the active site and the acceptor peptide and donor lipid-linked oligosaccharide (LLO) binding pockets. STT3A is present in the majority of OST complexes and mediates cotranslational N-glycosylation of most sites on target proteins, while STT3B-containing complexes are required for efficient post-translational glycosylation and mediate glycosylation of sites that have been skipped by STT3A. STT3A-containing OST-A complex is also required to prevent hyperglycosylation of some target proteins by preventing glycosylation of facultative sites before folding of target proteins is completed. This is Dolichyl-diphosphooligosaccharide--protein glycosyltransferase subunit STT3A from Mus musculus (Mouse).